Reading from the N-terminus, the 39-residue chain is uncharacterized protein (39 aa).

Polar residues predominate over residues 1–16 (MLNIQPTQSIVNNQPK). The segment at 1-39 (MLNIQPTQSIVNNQPKSDQKKQKPADLLKEFYDKTGNRN) is disordered. Positions 17 to 39 (SDQKKQKPADLLKEFYDKTGNRN) are enriched in basic and acidic residues.

This is an uncharacterized protein from Dictyostelium discoideum (Social amoeba).